The sequence spans 430 residues: Carbamoyl phosphate synthase arginine-specific small chain (430 aa).

Residues 1–9 constitute a mitochondrion transit peptide; that stretch reads MLSATKRYL. Positions 219-407 constitute a Glutamine amidotransferase type-1 domain; it reads HIAVLDCGAK…FDNINVYKKS (189 aa). Cysteine 296 acts as the Nucleophile in catalysis. Catalysis depends on residues histidine 380 and glutamate 382.

It belongs to the CarA family. As to quaternary structure, heterodimer composed of 2 chains; the small (or glutamine) chain promotes the hydrolysis of glutamine to ammonia, which is used by the large (or ammonia) chain to synthesize carbamoyl phosphate.

The protein localises to the mitochondrion matrix. It catalyses the reaction hydrogencarbonate + L-glutamine + 2 ATP + H2O = carbamoyl phosphate + L-glutamate + 2 ADP + phosphate + 2 H(+). It carries out the reaction L-glutamine + H2O = L-glutamate + NH4(+). It participates in amino-acid biosynthesis; L-arginine biosynthesis; carbamoyl phosphate from bicarbonate: step 1/1. Small subunit of the arginine-specific carbamoyl phosphate synthase (CPSase). CPSase catalyzes the formation of carbamoyl phosphate from the ammonia moiety of glutamine, carbonate, and phosphate donated by ATP, the first step of the arginine biosynthetic pathway. The small subunit (glutamine amidotransferase) binds and cleaves glutamine to supply the large subunit with the substrate ammonia. This chain is Carbamoyl phosphate synthase arginine-specific small chain (CPA1), found in Candida albicans (strain SC5314 / ATCC MYA-2876) (Yeast).